The chain runs to 208 residues: Uridine kinase (208 aa).

12 to 19 (GGSGGGKT) lines the ATP pocket.

Belongs to the uridine kinase family.

Its subcellular location is the cytoplasm. It catalyses the reaction uridine + ATP = UMP + ADP + H(+). It carries out the reaction cytidine + ATP = CMP + ADP + H(+). Its pathway is pyrimidine metabolism; CTP biosynthesis via salvage pathway; CTP from cytidine: step 1/3. It functions in the pathway pyrimidine metabolism; UMP biosynthesis via salvage pathway; UMP from uridine: step 1/1. This Streptococcus equi subsp. equi (strain 4047) protein is Uridine kinase.